The following is a 630-amino-acid chain: Conserved oligomeric Golgi complex subunit 6 (630 aa).

Belongs to the COG6 family. As to quaternary structure, component of the conserved oligomeric Golgi complex which is composed of eight different subunits and is required for normal Golgi morphology and localization.

The protein resides in the golgi apparatus membrane. Required for normal Golgi function. The protein is Conserved oligomeric Golgi complex subunit 6 of Drosophila melanogaster (Fruit fly).